Here is a 258-residue protein sequence, read N- to C-terminus: TLC domain-containing protein 4-A (258 aa).

Transmembrane regions (helical) follow at residues 5-25, 52-72, 85-105, 116-132, 171-191, and 212-232; these read LISY…FSAI, FVST…LAYD, FWVK…LLLL, YMVC…GYVL, PVLL…IAVI, and IGPQ…NVFW. Residues 43-245 form the TLC domain; the sequence is GKQCEWDSRF…IARGFYKVVK (203 aa).

The protein belongs to the TLCD4 family.

It is found in the membrane. The protein is TLC domain-containing protein 4-A (tlcd4-a) of Xenopus laevis (African clawed frog).